The following is a 171-amino-acid chain: Dual specificity protein phosphatase OPG106 (171 aa).

One can recognise a Tyrosine-protein phosphatase domain in the interval 23–171 (SPTIMTRVTN…IIEKYVIDKN (149 aa)). The Phosphocysteine intermediate role is filled by Cys-110.

Belongs to the protein-tyrosine phosphatase family. Non-receptor class dual specificity subfamily. In terms of assembly, homodimer.

The protein localises to the virion. It is found in the host cytoplasm. It carries out the reaction O-phospho-L-tyrosyl-[protein] + H2O = L-tyrosyl-[protein] + phosphate. The catalysed reaction is O-phospho-L-seryl-[protein] + H2O = L-seryl-[protein] + phosphate. With respect to regulation, inhibited by NSC-62914, NSC-28086, NSC-105687, NSC-23173, 540211 and 217691 with IC50 values of 48, 51, 212, 342, 4 and 11 uM, respectively. Functionally, serine/tyrosine phosphatase which down-regulates cellular antiviral response by dephosphorylating activated host STAT1 and blocking interferon (IFN)-stimulated innate immune responses. Dephosphorylates the OPG144 protein. This Homo sapiens (Human) protein is Dual specificity protein phosphatase OPG106 (OPG106).